A 185-amino-acid chain; its full sequence is ATP synthase subunit b 2 (185 aa).

The segment at 1 to 24 (MADSHGNAKGATAHTEAGGGHKAP) is disordered. Residues 34–56 (ASQLVSLTIAFVALYLISSRLAL) traverse the membrane as a helical segment.

Belongs to the ATPase B chain family. As to quaternary structure, F-type ATPases have 2 components, F(1) - the catalytic core - and F(0) - the membrane proton channel. F(1) has five subunits: alpha(3), beta(3), gamma(1), delta(1), epsilon(1). F(0) has three main subunits: a(1), b(2) and c(10-14). The alpha and beta chains form an alternating ring which encloses part of the gamma chain. F(1) is attached to F(0) by a central stalk formed by the gamma and epsilon chains, while a peripheral stalk is formed by the delta and b chains.

The protein localises to the cell inner membrane. In terms of biological role, f(1)F(0) ATP synthase produces ATP from ADP in the presence of a proton or sodium gradient. F-type ATPases consist of two structural domains, F(1) containing the extramembraneous catalytic core and F(0) containing the membrane proton channel, linked together by a central stalk and a peripheral stalk. During catalysis, ATP synthesis in the catalytic domain of F(1) is coupled via a rotary mechanism of the central stalk subunits to proton translocation. Functionally, component of the F(0) channel, it forms part of the peripheral stalk, linking F(1) to F(0). The b'-subunit is a diverged and duplicated form of b found in plants and photosynthetic bacteria. The protein is ATP synthase subunit b 2 (atpF2) of Nitrobacter hamburgensis (strain DSM 10229 / NCIMB 13809 / X14).